The primary structure comprises 436 residues: 5-hydroxytryptamine receptor 6 (436 aa).

Topologically, residues methionine 1–glycine 27 are extracellular. A glycan (N-linked (GlcNAc...) asparagine) is linked at asparagine 9. A helical membrane pass occupies residues tryptophan 28–cysteine 52. The Cytoplasmic segment spans residues threonine 53–asparagine 62. The helical transmembrane segment at phenylalanine 63–leucine 88 threads the bilayer. The Extracellular portion of the chain corresponds to tyrosine 89–arginine 96. Residues glycine 97–leucine 122 form a helical membrane-spanning segment. An intrachain disulfide couples cysteine 99 to cysteine 180. Aspartate 106 contacts serotonin. Over aspartate 123–arginine 142 the chain is Cytoplasmic. Residues alanine 143–histidine 167 form a helical membrane-spanning segment. Residues glutamate 168–serine 185 are Extracellular-facing. Residues leucine 186–cysteine 209 traverse the membrane as a helical segment. The Cytoplasmic portion of the chain corresponds to arginine 210 to alanine 266. Residues serine 267–valine 293 traverse the membrane as a helical segment. Asparagine 288 is a serotonin binding site. Topologically, residues cysteine 294 to proline 299 are extracellular. Residues glycine 300 to phenylalanine 323 form a helical membrane-spanning segment. Over methionine 324–proline 436 the chain is Cytoplasmic.

Belongs to the G-protein coupled receptor 1 family. Interacts with MTOR, RPTOR and NF1. Interacts with CDK5. Localized exclusively in the central nervous system, predominantly in the corpus striatum but also in various limbic and cortical regions.

The protein localises to the cell membrane. In terms of biological role, G-protein coupled receptor for 5-hydroxytryptamine (serotonin), a biogenic hormone that functions as a neurotransmitter, a hormone and a mitogen. Also has a high affinity for tricyclic psychotropic drugs. Ligand binding causes a conformation change that triggers signaling via guanine nucleotide-binding proteins (G proteins) and modulates the activity of downstream effectors. HTR6 is coupled to G(s) G alpha proteins and mediates activation of adenylate cyclase activity. Controls pyramidal neurons migration during corticogenesis, through the regulation of CDK5 activity. Is an activator of mTOR signaling. This is 5-hydroxytryptamine receptor 6 (Htr6) from Rattus norvegicus (Rat).